A 264-amino-acid chain; its full sequence is MPARCVAAHCGNTTKSGKSLFRFPKDRAVRLLWDRFVRGCRADWYGGNDRSVICSDHFAPACFDVSSVIQKNLRFSQRLRLVAGAVPTLHRVPAPAPKGGEEGDQAGRPDTRGELQAARHSEAAPGPVSCTRPRAGKQAAASQYSVGTEEITCENEVVQTQPHADNPSNTVTSVPTHCEEGPVHKSTQISLKRPRHRSVGIQAKVKAFGKRLCNATTQTEELWSRTSSLFDIYSSDSEIDTDWDIKSEQSDLSYIAVQVKEETC.

Residues 1 to 90 form a THAP-type zinc finger; it reads MPARCVAAHC…LVAGAVPTLH (90 aa). Disordered regions lie at residues 90 to 136 and 160 to 195; these read HRVP…PRAG and TQPH…KRPR. The span at 99 to 122 shows a compositional bias: basic and acidic residues; it reads GGEEGDQAGRPDTRGELQAARHSE. Residues 160 to 175 are compositionally biased toward polar residues; it reads TQPHADNPSNTVTSVP.

This chain is THAP domain-containing protein 10 (THAP10), found in Pongo abelii (Sumatran orangutan).